Reading from the N-terminus, the 473-residue chain is ATP synthase subunit beta (473 aa).

Position 158–165 (158–165 (GGAGVGKT)) interacts with ATP.

Belongs to the ATPase alpha/beta chains family. As to quaternary structure, F-type ATPases have 2 components, CF(1) - the catalytic core - and CF(0) - the membrane proton channel. CF(1) has five subunits: alpha(3), beta(3), gamma(1), delta(1), epsilon(1). CF(0) has three main subunits: a(1), b(2) and c(9-12). The alpha and beta chains form an alternating ring which encloses part of the gamma chain. CF(1) is attached to CF(0) by a central stalk formed by the gamma and epsilon chains, while a peripheral stalk is formed by the delta and b chains.

It is found in the cell membrane. The catalysed reaction is ATP + H2O + 4 H(+)(in) = ADP + phosphate + 5 H(+)(out). Functionally, produces ATP from ADP in the presence of a proton gradient across the membrane. The catalytic sites are hosted primarily by the beta subunits. This is ATP synthase subunit beta from Priestia megaterium (strain ATCC 12872 / QMB1551) (Bacillus megaterium).